We begin with the raw amino-acid sequence, 92 residues long: Putative transmembrane protein ORF92 (92 aa).

A run of 3 helical transmembrane segments spans residues 11–28 (FVKG…TYAI), 32–52 (FFSS…LFAS), and 54–74 (FLFD…IGVG).

Its subcellular location is the host membrane. This Acidianus convivator (ABV) protein is Putative transmembrane protein ORF92.